We begin with the raw amino-acid sequence, 109 residues long: uncharacterized protein (109 aa).

A helical transmembrane segment spans residues 12-32; it reads PNILIKGVYIFVLYGMCICIV.

The protein localises to the membrane. This is an uncharacterized protein from Saccharomyces cerevisiae (strain ATCC 204508 / S288c) (Baker's yeast).